Reading from the N-terminus, the 255-residue chain is Expansin-A25 (255 aa).

Residues 1–26 form the signal peptide; it reads MEYAILFATSLVITVLAASGFAPAHG. Positions 45-160 constitute an Expansin-like EG45 domain; it reads GGACGYGNLY…QQVKCWRQGG (116 aa). The Expansin-like CBD domain occupies 170 to 249; that stretch reads FFELVLVSNV…WWSFGMTFTS (80 aa).

Belongs to the expansin family. Expansin A subfamily. Expressed in panicles and flowers.

The protein resides in the secreted. It is found in the cell wall. Its subcellular location is the membrane. Its function is as follows. May cause loosening and extension of plant cell walls by disrupting non-covalent bonding between cellulose microfibrils and matrix glucans. No enzymatic activity has been found. May be required for rapid internodal elongation in deepwater rice during submergence. This Oryza sativa subsp. japonica (Rice) protein is Expansin-A25 (EXPA25).